The primary structure comprises 347 residues: NADH-ubiquinone oxidoreductase chain 2 (347 aa).

9 consecutive transmembrane segments (helical) span residues 3 to 23 (PPIFIIIMTTVISGTMMVLIS), 25 to 45 (HWLLIWIGFEMNMLAIIPILM), 59 to 79 (YFLTQATASMILMLGIIINLL), 111 to 131 (FHFWVPEVTQGISLSSGMILL), 149 to 169 (INPNLLMSMAIMSMLVAGWGG), 200 to 220 (LMHLNLVMYIMMTLGTFMLFM), 242 to 262 (LLILMLMLSLGGLPPLSGFIP), 274 to 294 (NMIIIPTFMAIAALLSLYFYM), and 325 to 345 (LLPPLIIMSTMLLPMTPMMLI).

Belongs to the complex I subunit 2 family. In terms of assembly, core subunit of respiratory chain NADH dehydrogenase (Complex I) which is composed of 45 different subunits. Interacts with TMEM242.

The protein localises to the mitochondrion inner membrane. The catalysed reaction is a ubiquinone + NADH + 5 H(+)(in) = a ubiquinol + NAD(+) + 4 H(+)(out). Core subunit of the mitochondrial membrane respiratory chain NADH dehydrogenase (Complex I) which catalyzes electron transfer from NADH through the respiratory chain, using ubiquinone as an electron acceptor. Essential for the catalytic activity and assembly of complex I. The sequence is that of NADH-ubiquinone oxidoreductase chain 2 from Ailurus fulgens (Himalayan red panda).